We begin with the raw amino-acid sequence, 409 residues long: Iron(III) salmochelin esterase (409 aa).

Belongs to the Fes family.

It localises to the cytoplasm. It carries out the reaction Fe(III)-C-5-deoxy-beta-D-glucosyl-enterobactin + H2O = Fe(III)-{di[N-(2,3-dihydroxybenzoyl)-L-seryl]-N-(C-5-[deoxy-beta-D-glucosyl]-2,3-dihydroxybenzoyl)-L-serine} + H(+). The enzyme catalyses Fe(III)-{di[N-(2,3-dihydroxybenzoyl)-L-seryl]-N-(C-5-[deoxy-beta-D-glucosyl]-2,3-dihydroxybenzoyl)-L-serine} + H2O + H(+) = Fe(III)-{N-(2,3-dihydroxybenzoyl)-L-seryl-N-(C-5-[deoxy-beta-D-glucosyl]-2,3-dihydroxybenzoyl)-L-serine} + N-(2,3-dihydroxybenzoyl)-L-serine. It catalyses the reaction Fe(III)-{N-(2,3-dihydroxybenzoyl)-L-seryl-[N-(C-5-[deoxy-beta-D-glucosyl]-2,3-dihydroxybenzoyl)-L-serine]2} + H2O + H(+) = Fe(III)-{N-(2,3-dihydroxybenzoyl)-L-seryl-N-(C-5-[deoxy-beta-D-glucosyl]-2,3-dihydroxybenzoyl)-L-serine} + N-(C-5-[deoxy-beta-D-glucosyl]-2,3-dihydroxybenzoyl)-L-serine. The catalysed reaction is Fe(III)-di(C-5-deoxy-beta-D-glucosyl)-enterobactin + H2O = Fe(III)-{N-(2,3-dihydroxybenzoyl)-L-seryl-[N-(C-5-[deoxy-beta-D-glucosyl]-2,3-dihydroxybenzoyl)-L-serine]2} + H(+). It carries out the reaction Fe(III)-{N-(2,3-dihydroxybenzoyl)-L-seryl-[N-(C-5-[deoxy-beta-D-glucosyl]-2,3-dihydroxybenzoyl)-L-serine]2} + H2O + H(+) = Fe(III)-[N-(C-5-[deoxy-beta-D-glucosyl]-2,3-dihydroxybenzoyl)-L-serine]2 + N-(2,3-dihydroxybenzoyl)-L-serine. The enzyme catalyses Fe(III)-[N-(C-5-[deoxy-beta-D-glucosyl]-2,3-dihydroxybenzoyl)-L-serine]2 + H2O + H(+) = Fe(III)-[N-(C-5-[deoxy-beta-D-glucosyl]-2,3-dihydroxybenzoyl)-L-serine] + N-(C-5-[deoxy-beta-D-glucosyl]-2,3-dihydroxybenzoyl)-L-serine. Catalyzes the hydrolysis of both the apo and Fe3(+)-bound forms of enterobactin (Ent), monoglucosyl-C-Ent (MGE), diglucosyl-C-Ent (DGE) and triglucosyl-C-Ent (TGE). Shows higher catalytic efficiencies on Fe3(+)-bound forms. The initial linear trimer products are, in turn, very good substrates for further hydrolytic cleavage by IroD, leading to complete degradation of the trilactone to DHB-Ser and/or Glc-DHB-Ser monomers. Hydrolyzes MGE and DGE regioselectively. May be the ferric MGE/DGE esterase responsible for cytoplasmic iron release. The protein is Iron(III) salmochelin esterase of Escherichia coli O6:H1 (strain CFT073 / ATCC 700928 / UPEC).